A 222-amino-acid chain; its full sequence is Neurotrophic factor BDNF precursor form (222 aa).

Residues 1–4 form the signal peptide; that stretch reads CMKA. The propeptide occupies 5-113; sequence APMKEVSVRG…AANMSMRVRR (109 aa). Asn106 carries an N-linked (GlcNAc...) asparagine glycan. Disulfide bonds link Cys126–Cys193 and Cys171–Cys222.

This sequence belongs to the NGF-beta family.

The protein localises to the secreted. Functionally, promotes the survival of neuronal populations that are all located either in the central nervous system or directly connected to it. The sequence is that of Neurotrophic factor BDNF precursor form (BDNF) from Xenopeltis unicolor (Sunbeam snake).